The primary structure comprises 252 residues: uncharacterized protein (252 aa).

16–40 contributes to the NADP(+) binding site; sequence LVTGASDGIGREAAMTYARYGATVI. Substrate is bound at residue S152. The Proton acceptor role is filled by Y165.

The protein belongs to the short-chain dehydrogenases/reductases (SDR) family.

This is an uncharacterized protein from Escherichia coli (strain K12).